The following is a 654-amino-acid chain: Fimbrin-2 (654 aa).

Calponin-homology (CH) domains are found at residues Asp-124–Leu-241, Leu-269–Asn-372, Ser-394–Ile-500, and Glu-515–Leu-623. 2 actin-binding regions span residues Asp-124 to Asn-372 and Ser-394 to Leu-623.

As to quaternary structure, interacts with F-actin.

Its subcellular location is the cytoplasm. It localises to the cytoskeleton. Its function is as follows. Cross-links actin filaments (F-actin). Stabilizes and prevents F-actin depolymerization mediated by profilin. May regulate actin cytoarchitecture, cell cycle, cell division, cell elongation and cytoplasmic tractus. This chain is Fimbrin-2, found in Arabidopsis thaliana (Mouse-ear cress).